A 1296-amino-acid polypeptide reads, in one-letter code: Protein ORF75 (1296 aa).

It is found in the virion tegument. This Homo sapiens (Human) protein is Protein ORF75 (ORF75).